Reading from the N-terminus, the 971-residue chain is UPF0182 protein RER_22310 (971 aa).

The next 7 membrane-spanning stretches (helical) occupy residues 16–36 (ILLVVAVVVAALLLVGPRLIG), 61–81 (FVLFLVVGIVVGAIVWLAMLL), 112–132 (LFGVIIPVAIGILSGLIAQAN), 172–192 (WLFVSILLAFVANLVTHYVFG), 209–229 (VQLAVIAGTFVLLKAVAYWFD), 257–277 (AKLILLSIAVICALAFFASIF), and 286–306 (MAVALLVLSSVLVGAVYPMIV). The segment at 890-927 (GSAATVTQPAPDPDTGAQPETPTTPTAPAPPASSDDVT) is disordered.

This sequence belongs to the UPF0182 family.

Its subcellular location is the cell membrane. In Rhodococcus erythropolis (strain PR4 / NBRC 100887), this protein is UPF0182 protein RER_22310.